The sequence spans 249 residues: tRNA pseudouridine synthase A (249 aa).

Aspartate 53 acts as the Nucleophile in catalysis. Residue tyrosine 111 participates in substrate binding.

Belongs to the tRNA pseudouridine synthase TruA family. As to quaternary structure, homodimer.

It catalyses the reaction uridine(38/39/40) in tRNA = pseudouridine(38/39/40) in tRNA. In terms of biological role, formation of pseudouridine at positions 38, 39 and 40 in the anticodon stem and loop of transfer RNAs. The polypeptide is tRNA pseudouridine synthase A (Streptococcus gordonii (strain Challis / ATCC 35105 / BCRC 15272 / CH1 / DL1 / V288)).